A 222-amino-acid chain; its full sequence is Cytidylate kinase 2 (222 aa).

7–15 (GPSGAGKGT) provides a ligand contact to ATP.

Belongs to the cytidylate kinase family. Type 1 subfamily.

The protein localises to the cytoplasm. It catalyses the reaction CMP + ATP = CDP + ADP. The enzyme catalyses dCMP + ATP = dCDP + ADP. The protein is Cytidylate kinase 2 of Haemophilus influenzae (strain ATCC 51907 / DSM 11121 / KW20 / Rd).